Reading from the N-terminus, the 162-residue chain is Ribosomal RNA large subunit methyltransferase H (162 aa).

Glycine 108 is an S-adenosyl-L-methionine binding site.

The protein belongs to the RNA methyltransferase RlmH family. As to quaternary structure, homodimer.

It localises to the cytoplasm. It carries out the reaction pseudouridine(1915) in 23S rRNA + S-adenosyl-L-methionine = N(3)-methylpseudouridine(1915) in 23S rRNA + S-adenosyl-L-homocysteine + H(+). Functionally, specifically methylates the pseudouridine at position 1915 (m3Psi1915) in 23S rRNA. The sequence is that of Ribosomal RNA large subunit methyltransferase H from Methylobacterium sp. (strain 4-46).